A 633-amino-acid chain; its full sequence is Leucine-rich repeat and IQ domain-containing protein 3 (633 aa).

LRR repeat units follow at residues 51-72 (SLRV…QSCK), 73-94 (KLIK…NFWS), and 98-119 (NLKL…CVLS). An LRRCT domain is found at 132–179 (CPVSLKKGYRHVLVNSIWPLKALDHHVISDEEIIQNWRLPERFKTFSP). One can recognise an IQ domain in the interval 215–244 (HNSPVLIIQRWIRGFIVRKHLSPYFKHKKH). The interval 324-343 (SKQPRHHIHKGQKAMKAESE) is disordered. The span at 325-336 (KQPRHHIHKGQK) shows a compositional bias: basic residues. The stretch at 556–617 (IEKWEEQKYK…AKVEYIKTFY (62 aa)) forms a coiled coil.

The polypeptide is Leucine-rich repeat and IQ domain-containing protein 3 (Lrriq3) (Mus musculus (Mouse)).